A 215-amino-acid polypeptide reads, in one-letter code: GTP-binding nuclear protein Ran (215 aa).

One can recognise a Small GTPase Ran-type domain in the interval 6–170 (DIPTFKLVLV…LWLARKLLGD (165 aa)). Residues 17–24 (DGGTGKTT), 35–41 (EKKYVAT), G67, 121–124 (NKVD), and 149–151 (SAK) each bind GTP. The interval 36-44 (KKYVATLGV) is switch-I. Residues 67–83 (GQEKFGGLRDGYYIQGQ) are switch-II.

The protein belongs to the small GTPase superfamily. Ran family. In terms of assembly, found in a nuclear export complex with RanGTP, exportin and pre-miRNA.

The protein resides in the nucleus. In terms of biological role, GTP-binding protein involved in nucleocytoplasmic transport. Required for the import of protein into the nucleus and also for RNA export. Involved in chromatin condensation and control of cell cycle. This is GTP-binding nuclear protein Ran from Brugia malayi (Filarial nematode worm).